A 441-amino-acid chain; its full sequence is FAM10 family protein At4g22670 (441 aa).

Residues 41–114 (KIPTGVHEED…PQKMGDSSVE (74 aa)) form a disordered region. The segment covering 46–55 (VHEEDKDTKP) has biased composition (basic and acidic residues). 2 stretches are compositionally biased toward acidic residues: residues 61-71 (EESDDDMDETE) and 78-102 (EEEE…EPDN). Residues S63 and S89 each carry the phosphoserine modification. TPR repeat units follow at residues 121-156 (EAAQ…NPTS), 158-190 (IMYG…NPDS), and 191-224 (AKGY…DYDE). Residues 236–285 (NAHKLEEHRRKYDRLRKEREDKKAERDRLRRRAEAQAAYDKAKKEEQSSS) adopt a coiled-coil conformation. A compositionally biased stretch (basic and acidic residues) spans 244-282 (RRKYDRLRKEREDKKAERDRLRRRAEAQAAYDKAKKEEQ). Positions 244-314 (RRKYDRLRKE…MPGGFPGGMG (71 aa)) are disordered. Residues 289-314 (SGGGFPGGMPGGFPGGMPGGFPGGMG) show a composition bias toward gly residues. Residues 391 to 430 (DPELMTAFSDPEVMAALQDVMKNPANLAKHQANPKVAPVI) form the STI1 domain.

The protein belongs to the FAM10 family.

The chain is FAM10 family protein At4g22670 from Arabidopsis thaliana (Mouse-ear cress).